Consider the following 376-residue polypeptide: Alpha-centractin (376 aa).

N-acetylmethionine is present on Met-1.

Belongs to the actin family. ARP1 subfamily. In terms of assembly, part of the ACTR1A/ACTB filament around which the dynactin complex is built. The filament contains 8 copies of ACTR1A and 1 ACTB. Interacts with dynein and adapters such as BICD2. Interacts with BCCIP (isoform 2/alpha).

It is found in the cytoplasm. The protein localises to the cytoskeleton. The protein resides in the microtubule organizing center. It localises to the centrosome. Its subcellular location is the cell cortex. Part of the ACTR1A/ACTB filament around which the dynactin complex is built. The dynactin multiprotein complex activates the molecular motor dynein for ultra-processive transport along microtubules. The protein is Alpha-centractin (ACTR1A) of Canis lupus familiaris (Dog).